The sequence spans 179 residues: ATP synthase subunit delta (179 aa).

This sequence belongs to the ATPase delta chain family. F-type ATPases have 2 components, F(1) - the catalytic core - and F(0) - the membrane proton channel. F(1) has five subunits: alpha(3), beta(3), gamma(1), delta(1), epsilon(1). F(0) has three main subunits: a(1), b(2) and c(10-14). The alpha and beta chains form an alternating ring which encloses part of the gamma chain. F(1) is attached to F(0) by a central stalk formed by the gamma and epsilon chains, while a peripheral stalk is formed by the delta and b chains.

Its subcellular location is the cell inner membrane. Functionally, f(1)F(0) ATP synthase produces ATP from ADP in the presence of a proton or sodium gradient. F-type ATPases consist of two structural domains, F(1) containing the extramembraneous catalytic core and F(0) containing the membrane proton channel, linked together by a central stalk and a peripheral stalk. During catalysis, ATP synthesis in the catalytic domain of F(1) is coupled via a rotary mechanism of the central stalk subunits to proton translocation. In terms of biological role, this protein is part of the stalk that links CF(0) to CF(1). It either transmits conformational changes from CF(0) to CF(1) or is implicated in proton conduction. This Paraburkholderia phymatum (strain DSM 17167 / CIP 108236 / LMG 21445 / STM815) (Burkholderia phymatum) protein is ATP synthase subunit delta.